The primary structure comprises 436 residues: Trigger factor (436 aa).

Disordered regions lie at residues 1 to 26 and 81 to 100; these read MQVS…RVEN and QESL…TGEG. The PPIase FKBP-type domain occupies 161–246; it reads EDRVVIDFHG…VKRVEEPQLP (86 aa).

It belongs to the FKBP-type PPIase family. Tig subfamily.

The protein localises to the cytoplasm. It carries out the reaction [protein]-peptidylproline (omega=180) = [protein]-peptidylproline (omega=0). Functionally, involved in protein export. Acts as a chaperone by maintaining the newly synthesized protein in an open conformation. Functions as a peptidyl-prolyl cis-trans isomerase. The protein is Trigger factor of Halorhodospira halophila (strain DSM 244 / SL1) (Ectothiorhodospira halophila (strain DSM 244 / SL1)).